Consider the following 126-residue polypeptide: Gas vesicle protein J (126 aa).

The protein belongs to the gas vesicle GvpA family. As to quaternary structure, interacts with GvpA.

The protein resides in the gas vesicle. Its function is as follows. A minor component of the gas vesicle, might be involved in nucleating gas vesicle formation. Gas vesicles (GV) are hollow, gas filled proteinaceous nanostructures. During planktonic growth they allow positioning of the organism at a favorable depth for light or nutrient acquisition. The chain is Gas vesicle protein J from Pseudanabaena galeata (strain PCC 6901).